We begin with the raw amino-acid sequence, 307 residues long: Thiamine-monophosphate kinase (307 aa).

Mg(2+) contacts are provided by Asp26, Thr37, Thr38, and Asp39. His46 contacts substrate. Residues Asp68 and Asp117 each contribute to the Mg(2+) site. ATP contacts are provided by residues 116–117 (GD) and Arg140. A Mg(2+)-binding site is contributed by Asp207. Thr209 provides a ligand contact to ATP. Residue Asp210 coordinates Mg(2+). 2 residues coordinate substrate: Glu254 and Phe304.

Belongs to the thiamine-monophosphate kinase family.

It catalyses the reaction thiamine phosphate + ATP = thiamine diphosphate + ADP. The protein operates within cofactor biosynthesis; thiamine diphosphate biosynthesis; thiamine diphosphate from thiamine phosphate: step 1/1. Catalyzes the ATP-dependent phosphorylation of thiamine-monophosphate (TMP) to form thiamine-pyrophosphate (TPP), the active form of vitamin B1. The protein is Thiamine-monophosphate kinase of Leptospira interrogans serogroup Icterohaemorrhagiae serovar Lai (strain 56601).